The primary structure comprises 408 residues: UPF0761 membrane protein Avin_36810 (408 aa).

The next 6 helical transmembrane spans lie at 33–53, 92–112, 132–152, 174–194, 209–229, and 238–258; these read YTAL…LSVV, HLTW…LMTV, FLLH…GFAL, LLKV…YVAV, LFAA…VALF, and AFAA…IVLL.

It belongs to the UPF0761 family.

Its subcellular location is the cell inner membrane. The chain is UPF0761 membrane protein Avin_36810 from Azotobacter vinelandii (strain DJ / ATCC BAA-1303).